The chain runs to 462 residues: Argininosuccinate lyase (462 aa).

It belongs to the lyase 1 family. Argininosuccinate lyase subfamily.

The protein localises to the cytoplasm. It carries out the reaction 2-(N(omega)-L-arginino)succinate = fumarate + L-arginine. The protein operates within amino-acid biosynthesis; L-arginine biosynthesis; L-arginine from L-ornithine and carbamoyl phosphate: step 3/3. In Ehrlichia ruminantium (strain Welgevonden), this protein is Argininosuccinate lyase.